The sequence spans 294 residues: N-acetylmuramic acid 6-phosphate etherase (294 aa).

In terms of domain architecture, SIS spans 54 to 217; the sequence is VIQSFEEEGR…STASMIGVGK (164 aa). Glutamate 82 serves as the catalytic Proton donor. The active site involves glutamate 113.

The protein belongs to the GCKR-like family. MurNAc-6-P etherase subfamily. As to quaternary structure, homodimer.

It catalyses the reaction N-acetyl-D-muramate 6-phosphate + H2O = N-acetyl-D-glucosamine 6-phosphate + (R)-lactate. The protein operates within amino-sugar metabolism; N-acetylmuramate degradation. Functionally, specifically catalyzes the cleavage of the D-lactyl ether substituent of MurNAc 6-phosphate, producing GlcNAc 6-phosphate and D-lactate. This chain is N-acetylmuramic acid 6-phosphate etherase, found in Bacillus thuringiensis subsp. konkukian (strain 97-27).